We begin with the raw amino-acid sequence, 70 residues long: Large ribosomal subunit protein eL38 (70 aa).

The protein belongs to the eukaryotic ribosomal protein eL38 family.

The polypeptide is Large ribosomal subunit protein eL38 (RpL38) (Plutella xylostella (Diamondback moth)).